A 179-amino-acid chain; its full sequence is Dual-action ribosomal maturation protein DarP (179 aa).

Belongs to the DarP family.

The protein localises to the cytoplasm. Its function is as follows. Member of a network of 50S ribosomal subunit biogenesis factors which assembles along the 30S-50S interface, preventing incorrect 23S rRNA structures from forming. Promotes peptidyl transferase center (PTC) maturation. This chain is Dual-action ribosomal maturation protein DarP, found in Erwinia tasmaniensis (strain DSM 17950 / CFBP 7177 / CIP 109463 / NCPPB 4357 / Et1/99).